A 144-amino-acid polypeptide reads, in one-letter code: MSEKQSPKTSEAECSAMDLPEFEDEENWLFKVLGFQPGPSSALDDDTDDQADEPLSAAEFLHLQDILQEDRVSSTDDEDTCQAGCTEDDETSHSDRDIDNNVKVITGNIKASPSMYMEMFTDQNPQADQDLEETESDGAMNPTD.

Disordered stretches follow at residues 1–21 (MSEK…DLPE), 69–99 (EDRV…RDID), and 120–144 (FTDQ…NPTD). The segment covering 75–90 (TDDEDTCQAGCTEDDE) has biased composition (acidic residues).

As to expression, testis.

Its function is as follows. May have an RNA/DNA binding role. The polypeptide is Testis-specific protein TSX (Tsx) (Mus musculus (Mouse)).